The sequence spans 237 residues: 2-C-methyl-D-erythritol 4-phosphate cytidylyltransferase (237 aa).

The protein belongs to the IspD/TarI cytidylyltransferase family. IspD subfamily.

It carries out the reaction 2-C-methyl-D-erythritol 4-phosphate + CTP + H(+) = 4-CDP-2-C-methyl-D-erythritol + diphosphate. The protein operates within isoprenoid biosynthesis; isopentenyl diphosphate biosynthesis via DXP pathway; isopentenyl diphosphate from 1-deoxy-D-xylulose 5-phosphate: step 2/6. Functionally, catalyzes the formation of 4-diphosphocytidyl-2-C-methyl-D-erythritol from CTP and 2-C-methyl-D-erythritol 4-phosphate (MEP). The polypeptide is 2-C-methyl-D-erythritol 4-phosphate cytidylyltransferase (Clostridioides difficile (strain 630) (Peptoclostridium difficile)).